Here is a 450-residue protein sequence, read N- to C-terminus: Flavin-containing monooxygenase FMO GS-OX-like 3 (450 aa).

17–22 (GAGPAG) serves as a coordination point for FAD. 215–220 (GNSSSA) is a binding site for NADP(+).

Belongs to the FMO family. The cofactor is FAD.

In terms of biological role, catalyzes the conversion of methylthioalkyl glucosinolates of any chain length into methylsulfinylalkyl glucosinolates. The protein is Flavin-containing monooxygenase FMO GS-OX-like 3 of Arabidopsis thaliana (Mouse-ear cress).